Here is a 142-residue protein sequence, read N- to C-terminus: Protein archease (142 aa).

Residues Asp-12, Asp-141, and Leu-142 each coordinate Ca(2+).

This sequence belongs to the archease family.

Functionally, activates the tRNA-splicing ligase complex by facilitating the enzymatic turnover of catalytic subunit RtcB. Acts by promoting the guanylylation of RtcB, a key intermediate step in tRNA ligation. Can also alter the NTP specificity of RtcB such that ATP, dGTP or ITP is used efficiently. The chain is Protein archease from Thermococcus gammatolerans (strain DSM 15229 / JCM 11827 / EJ3).